Reading from the N-terminus, the 279-residue chain is 3-methyl-2-oxobutanoate hydroxymethyltransferase (279 aa).

Mg(2+) contacts are provided by Asp-49 and Asp-88. 3-methyl-2-oxobutanoate-binding positions include 49–50 (DS), Asp-88, and Lys-118. A Mg(2+)-binding site is contributed by Glu-120. Glu-187 serves as the catalytic Proton acceptor.

Belongs to the PanB family. In terms of assembly, homodecamer; pentamer of dimers. Mg(2+) serves as cofactor.

Its subcellular location is the cytoplasm. It carries out the reaction 3-methyl-2-oxobutanoate + (6R)-5,10-methylene-5,6,7,8-tetrahydrofolate + H2O = 2-dehydropantoate + (6S)-5,6,7,8-tetrahydrofolate. Its pathway is cofactor biosynthesis; (R)-pantothenate biosynthesis; (R)-pantoate from 3-methyl-2-oxobutanoate: step 1/2. Its function is as follows. Catalyzes the reversible reaction in which hydroxymethyl group from 5,10-methylenetetrahydrofolate is transferred onto alpha-ketoisovalerate to form ketopantoate. In Agrobacterium fabrum (strain C58 / ATCC 33970) (Agrobacterium tumefaciens (strain C58)), this protein is 3-methyl-2-oxobutanoate hydroxymethyltransferase.